The sequence spans 567 residues: WD repeat-containing protein 20 (567 aa).

An N-acetylalanine modification is found at Ala2. 4 WD repeats span residues 147 to 187 (IDKS…GTTA), 216 to 257 (VGEG…GTMK), 258 to 297 (SYFGGLLCLCWSPDGKYIVTGGEDDLVTVWSFLDCRVIAR), and 345 to 389 (STQS…LFPH). Ser355 and Ser358 each carry phosphoserine. A disordered region spans residues 408 to 441 (PAGSNGSAVTTPGNSVPPPLPRSNSLPHSAVSNA). 2 stretches are compositionally biased toward polar residues: residues 411–421 (SNGSAVTTPGN) and 429–441 (RSNSLPHSAVSNA). Phosphoserine is present on residues Ser430, Ser432, and Ser463. Over residues 468-481 (KERHHEKDRKRNHS) the composition is skewed to basic residues. A disordered region spans residues 468 to 493 (KERHHEKDRKRNHSMGHISSKSSDKL). The stretch at 529–566 (IAHERLTVLVFLEDCIVTACQEGFICTWARPGKVSKFQ) is one WD 5 repeat.

Interacts with USP12; promotes translocation of USP12/WDR20 to the plasma membrane. Component of the USP12/WDR20/WDR48 deubiquitinating complex. Interacts with USP46; contributes to the cytoplasmic localization of the USP46/WDR20 complex. Component of the USP12/DMWD/WDR48 deubiquitinating complex.

Its subcellular location is the cytoplasm. The protein resides in the nucleus. Functionally, regulator of deubiquitinating complexes. Activates deubiquitinating activity of complexes containing USP12. Anchors at the base of the ubiquitin-contacting loop of USP12 and remotely modulates the catalytic center of the enzyme. Regulates shuttling of complexes containing USP12 between the plasma membrane, cytoplasm and nucleus. The chain is WD repeat-containing protein 20 (Wdr20) from Mus musculus (Mouse).